The chain runs to 201 residues: Pyridoxal 5'-phosphate synthase subunit PdxT (201 aa).

49-51 provides a ligand contact to L-glutamine; sequence GES. Cys81 functions as the Nucleophile in the catalytic mechanism. L-glutamine is bound by residues Arg110 and 139-140; that span reads IR. Active-site charge relay system residues include His180 and Glu182.

Belongs to the glutaminase PdxT/SNO family. In the presence of PdxS, forms a dodecamer of heterodimers. Only shows activity in the heterodimer.

The catalysed reaction is aldehydo-D-ribose 5-phosphate + D-glyceraldehyde 3-phosphate + L-glutamine = pyridoxal 5'-phosphate + L-glutamate + phosphate + 3 H2O + H(+). The enzyme catalyses L-glutamine + H2O = L-glutamate + NH4(+). Its pathway is cofactor biosynthesis; pyridoxal 5'-phosphate biosynthesis. Functionally, catalyzes the hydrolysis of glutamine to glutamate and ammonia as part of the biosynthesis of pyridoxal 5'-phosphate. The resulting ammonia molecule is channeled to the active site of PdxS. The sequence is that of Pyridoxal 5'-phosphate synthase subunit PdxT from Salinispora tropica (strain ATCC BAA-916 / DSM 44818 / JCM 13857 / NBRC 105044 / CNB-440).